We begin with the raw amino-acid sequence, 232 residues long: Large ribosomal subunit protein uL1 (232 aa).

Belongs to the universal ribosomal protein uL1 family. In terms of assembly, part of the 50S ribosomal subunit.

Its function is as follows. Binds directly to 23S rRNA. The L1 stalk is quite mobile in the ribosome, and is involved in E site tRNA release. Protein L1 is also a translational repressor protein, it controls the translation of the L11 operon by binding to its mRNA. The sequence is that of Large ribosomal subunit protein uL1 from Christiangramia forsetii (strain DSM 17595 / CGMCC 1.15422 / KT0803) (Gramella forsetii).